A 304-amino-acid chain; its full sequence is Urease accessory protein UreD (304 aa).

It belongs to the UreD family. In terms of assembly, ureD, UreF and UreG form a complex that acts as a GTP-hydrolysis-dependent molecular chaperone, activating the urease apoprotein by helping to assemble the nickel containing metallocenter of UreC. The UreE protein probably delivers the nickel.

It is found in the cytoplasm. Required for maturation of urease via the functional incorporation of the urease nickel metallocenter. The sequence is that of Urease accessory protein UreD from Haloquadratum walsbyi (strain DSM 16790 / HBSQ001).